Here is a 741-residue protein sequence, read N- to C-terminus: Transketolase, chloroplastic (741 aa).

The N-terminal 67 residues, 1–67, are a transit peptide targeting the chloroplast; that stretch reads MASSSSLTLS…TKQQFSVRAS (67 aa). Position 103 (H103) interacts with substrate. Thiamine diphosphate-binding positions include H143 and 192 to 194; that span reads GPL. D233 contacts Mg(2+). G234 and N263 together coordinate thiamine diphosphate. The Mg(2+) site is built by N263 and I265. 3 residues coordinate substrate: H340, R434, and S461. H340 serves as a coordination point for thiamine diphosphate. 2 residues coordinate thiamine diphosphate: E488 and F515. E488 functions as the Proton donor in the catalytic mechanism. Residues H539, D547, and R598 each contribute to the substrate site.

Belongs to the transketolase family. Homodimer. Mg(2+) is required as a cofactor. It depends on Ca(2+) as a cofactor. Mn(2+) serves as cofactor. The cofactor is Co(2+). Requires thiamine diphosphate as cofactor.

It localises to the plastid. Its subcellular location is the chloroplast thylakoid membrane. It catalyses the reaction D-sedoheptulose 7-phosphate + D-glyceraldehyde 3-phosphate = aldehydo-D-ribose 5-phosphate + D-xylulose 5-phosphate. The protein operates within carbohydrate biosynthesis; Calvin cycle. Functionally, catalyzes the reversible transfer of a two-carbon ketol group from fructose-6-phosphate or sedoheptulose-7-phosphate to glyceraldehyde-3-phosphate to yield xylulose-5-phosphate and erythrose-4-phosphate or ribose-5-phosphate, respectively. In Solanum tuberosum (Potato), this protein is Transketolase, chloroplastic.